Consider the following 342-residue polypeptide: Anthranilate phosphoribosyltransferase (342 aa).

5-phospho-alpha-D-ribose 1-diphosphate-binding positions include G83, 86–87 (GD), T91, 93–96 (NIST), 111–119 (KHGNRGVSS), and S123. Residue G83 participates in anthranilate binding. S95 is a Mg(2+) binding site. N114 lines the anthranilate pocket. Anthranilate is bound at residue R169. Residues D228 and E229 each contribute to the Mg(2+) site.

This sequence belongs to the anthranilate phosphoribosyltransferase family. Homodimer. It depends on Mg(2+) as a cofactor.

It carries out the reaction N-(5-phospho-beta-D-ribosyl)anthranilate + diphosphate = 5-phospho-alpha-D-ribose 1-diphosphate + anthranilate. It functions in the pathway amino-acid biosynthesis; L-tryptophan biosynthesis; L-tryptophan from chorismate: step 2/5. Functionally, catalyzes the transfer of the phosphoribosyl group of 5-phosphorylribose-1-pyrophosphate (PRPP) to anthranilate to yield N-(5'-phosphoribosyl)-anthranilate (PRA). The chain is Anthranilate phosphoribosyltransferase from Paraburkholderia phymatum (strain DSM 17167 / CIP 108236 / LMG 21445 / STM815) (Burkholderia phymatum).